We begin with the raw amino-acid sequence, 225 residues long: Phosphoenolpyruvate guanylyltransferase (225 aa).

3 residues coordinate phosphoenolpyruvate: Thr150, Gly166, and Ser169. Residues 167 to 186 (PESARGHANSGARPLNGQWP) are disordered.

This sequence belongs to the CofC family.

It carries out the reaction phosphoenolpyruvate + GTP + H(+) = enolpyruvoyl-2-diphospho-5'-guanosine + diphosphate. It functions in the pathway cofactor biosynthesis; coenzyme F420 biosynthesis. Functionally, guanylyltransferase that catalyzes the activation of phosphoenolpyruvate (PEP) as enolpyruvoyl-2-diphospho-5'-guanosine, via the condensation of PEP with GTP. It is involved in the biosynthesis of coenzyme F420, a hydride carrier cofactor. The sequence is that of Phosphoenolpyruvate guanylyltransferase from Rhodococcus erythropolis (strain PR4 / NBRC 100887).